The following is a 194-amino-acid chain: Fe/S biogenesis protein NfuA (194 aa).

The [4Fe-4S] cluster site is built by Cys-152 and Cys-155.

It belongs to the NfuA family. As to quaternary structure, homodimer. It depends on [4Fe-4S] cluster as a cofactor.

Involved in iron-sulfur cluster biogenesis. Binds a 4Fe-4S cluster, can transfer this cluster to apoproteins, and thereby intervenes in the maturation of Fe/S proteins. Could also act as a scaffold/chaperone for damaged Fe/S proteins. The polypeptide is Fe/S biogenesis protein NfuA (Pseudomonas aeruginosa (strain LESB58)).